A 199-amino-acid chain; its full sequence is GTP cyclohydrolase-2 (199 aa).

Residue 52 to 56 (RMHSE) participates in GTP binding. Cys57, Cys68, and Cys70 together coordinate Zn(2+). GTP contacts are provided by residues Gln73, 94–96 (EGR), and Thr116. The active-site Proton acceptor is the Asp128. Arg130 serves as the catalytic Nucleophile. GTP-binding residues include Thr151 and Lys156.

This sequence belongs to the GTP cyclohydrolase II family. Zn(2+) serves as cofactor.

It carries out the reaction GTP + 4 H2O = 2,5-diamino-6-hydroxy-4-(5-phosphoribosylamino)-pyrimidine + formate + 2 phosphate + 3 H(+). Its pathway is cofactor biosynthesis; riboflavin biosynthesis; 5-amino-6-(D-ribitylamino)uracil from GTP: step 1/4. In terms of biological role, catalyzes the conversion of GTP to 2,5-diamino-6-ribosylamino-4(3H)-pyrimidinone 5'-phosphate (DARP), formate and pyrophosphate. The protein is GTP cyclohydrolase-2 of Aliivibrio fischeri (strain ATCC 700601 / ES114) (Vibrio fischeri).